A 72-amino-acid polypeptide reads, in one-letter code: Sec-independent protein translocase protein TatA (72 aa).

A helical membrane pass occupies residues 1 to 21 (MPFGLGLPEILVIGVIALLIF). Residues 41-72 (KSGVSDEPAPQQSASKETAPNPPQSLPSGKDS) form a disordered region.

This sequence belongs to the TatA/E family. As to quaternary structure, forms a complex with TatC.

It localises to the cell inner membrane. Part of the twin-arginine translocation (Tat) system that transports large folded proteins containing a characteristic twin-arginine motif in their signal peptide across membranes. TatA could form the protein-conducting channel of the Tat system. The sequence is that of Sec-independent protein translocase protein TatA from Gloeobacter violaceus (strain ATCC 29082 / PCC 7421).